Reading from the N-terminus, the 335-residue chain is Atypical chemokine receptor 1 (335 aa).

The Extracellular segment spans residues 1 to 62 (MGNCLHPAEL…CNLLDDSALP (62 aa)). Residues asparagine 16, asparagine 26, and asparagine 32 are each glycosylated (N-linked (GlcNAc...) asparagine). 2 disulfide bridges follow: cysteine 50–cysteine 275 and cysteine 128–cysteine 194. The helical transmembrane segment at 63 to 83 (FFILVSVLGILASGTVLFMFF) threads the bilayer. Over 84–94 (RPLFHWQLCPG) the chain is Cytoplasmic. Residues 95 to 115 (WPVLAQLAVGSALFSIVVPIL) traverse the membrane as a helical segment. Over 116 to 128 (APGLGNTRSSALC) the chain is Extracellular. The chain crosses the membrane as a helical span at residues 129–152 (SLGYCVWYGSAFAQALLLGCHASL). At 153 to 165 (GPKLGAGQVPGLT) the chain is on the cytoplasmic side. The chain crosses the membrane as a helical span at residues 166–186 (LGLSVGLWGVAALLTLPITLA). The Extracellular segment spans residues 187–206 (SGASGGLCTPAYSMELKALQ). The helical transmembrane segment at 207–227 (ATHAVACLAVFVLLPLGLFGA) threads the bilayer. At 228 to 243 (KGLKKALGMGPGPWMN) the chain is on the cytoplasmic side. Residues 244-264 (ILWAWFIFWWPHGVVLGLDFL) form a helical membrane-spanning segment. Topologically, residues 265-286 (VRSKLLLLSTCLAQQALDLLLN) are extracellular. Residues 287 to 307 (LAEALAILHCVATPLLLALFC) traverse the membrane as a helical segment. The Cytoplasmic segment spans residues 308–335 (HQATRTLLPSLPLPEGWSSHLDTLGSES).

It belongs to the G-protein coupled receptor 1 family. Atypical chemokine receptor subfamily. (Microbial infection) Interacts (via N-terminal extracellular domain) with Plasmodium knowlesi Duffy receptor alpha form (DBPalpha) (via region II).

It localises to the early endosome. Its subcellular location is the recycling endosome. The protein localises to the membrane. In terms of biological role, atypical chemokine receptor that controls chemokine levels and localization via high-affinity chemokine binding that is uncoupled from classic ligand-driven signal transduction cascades, resulting instead in chemokine sequestration, degradation, or transcytosis. Also known as interceptor (internalizing receptor) or chemokine-scavenging receptor or chemokine decoy receptor. Has a promiscuous chemokine-binding profile, interacting with inflammatory chemokines of both the CXC and the CC subfamilies but not with homeostatic chemokines. Acts as a receptor for chemokines including CCL2, CCL5, CCL7, CCL11, CCL13, CCL14, CCL17, CXCL5, CXCL6, IL8/CXCL8, CXCL11, GRO, RANTES, MCP-1 and TARC. May regulate chemokine bioavailability and, consequently, leukocyte recruitment through two distinct mechanisms: when expressed in endothelial cells, it sustains the abluminal to luminal transcytosis of tissue-derived chemokines and their subsequent presentation to circulating leukocytes; when expressed in erythrocytes, serves as blood reservoir of cognate chemokines but also as a chemokine sink, buffering potential surges in plasma chemokine levels. (Microbial infection) Acts as a receptor for the malaria parasite Plasmodium knowlesi. The protein is Atypical chemokine receptor 1 (ACKR1) of Macaca mulatta (Rhesus macaque).